The following is a 285-amino-acid chain: Transcription factor LBX1 (285 aa).

Residues 1 to 20 are compositionally biased toward basic and acidic residues; it reads MTSKEDGKAAPGEERRRSPL. Residues 1-36 form a disordered region; it reads MTSKEDGKAAPGEERRRSPLDHLPPPANSNKPLTPF. The segment at residues 125 to 184 is a DNA-binding region (homeobox); that stretch reads RRKSRTAFTNHQIYELEKRFLYQKYLSPADRDQIAQQLGLTNAQVITWFQNRRAKLKRDL. The tract at residues 212–285 is disordered; that stretch reads EQNSEASGGG…EEDEEIDVDD (74 aa). A compositionally biased stretch (gly residues) spans 218–230; the sequence is SGGGGGGGGGGCG. Over residues 272–285 the composition is skewed to acidic residues; that stretch reads CSEDEEDEEIDVDD.

As to quaternary structure, interacts with SKOR1 which acts as a transcriptional corepressor.

Its subcellular location is the nucleus. Transcription factor required for the development of GABAergic interneurons in the dorsal horn of the spinal cord and migration and further development of hypaxial muscle precursor cells for limb muscles, diaphragm and hypoglossal cord. The protein is Transcription factor LBX1 of Rattus norvegicus (Rat).